Here is a 344-residue protein sequence, read N- to C-terminus: uncharacterized protein (344 aa).

Topologically, residues 1–98 (MIDFVKSRDT…NNDEIGIWNY (98 aa)) are cytoplasmic. A helical transmembrane segment spans residues 99 to 119 (ISVAEMGGVLLFLSYWIWTCL). Residue histidine 120 is a topological domain, lumenal. A helical membrane pass occupies residues 121 to 141 (FSKIIFPAQKVICLYIFLFAL). Topologically, residues 142–169 (NQTLQECIEEYVFSSECIKYRQFYSVYE) are cytoplasmic. The chain crosses the membrane as a helical span at residues 170–192 (IIDFLRTNFYRLFVIYCALGFGI). Over 193–198 (TRTVPK) the chain is Lumenal. Residues 199-219 (YLMIKGISIVIALCSVYWISL) traverse the membrane as a helical segment. Over 220-222 (YKD) the chain is Cytoplasmic. Residues 223 to 243 (VYVVSEIFDMIQYEVFPAIWV) form a helical membrane-spanning segment. The Lumenal segment spans residues 244–273 (YSICHLLKQCTSVTTYENASKARFFRRMLN). The chain crosses the membrane as a helical span at residues 274–294 (AFIFIFCASPMLHYLSNIIFG). Residues 295–344 (NFDYRLSVIIGDLFTFMEKIAFPCYIMFPTHNEALAYNRNVAEEAQEKMI) are Cytoplasmic-facing.

The protein resides in the endoplasmic reticulum membrane. This is an uncharacterized protein from Schizosaccharomyces pombe (strain 972 / ATCC 24843) (Fission yeast).